The following is a 434-amino-acid chain: Cobyrinate a,c-diamide synthase (434 aa).

Residues 240–430 (KAYVAYDSAF…SHFHFSRTRR (191 aa)) form the GATase cobBQ-type domain. The active-site Nucleophile is C322.

Belongs to the CobB/CbiA family. Requires Mg(2+) as cofactor.

The catalysed reaction is cob(II)yrinate + 2 L-glutamine + 2 ATP + 2 H2O = cob(II)yrinate a,c diamide + 2 L-glutamate + 2 ADP + 2 phosphate + 2 H(+). The protein operates within cofactor biosynthesis; adenosylcobalamin biosynthesis; cob(II)yrinate a,c-diamide from sirohydrochlorin (anaerobic route): step 10/10. In terms of biological role, catalyzes the ATP-dependent amidation of the two carboxylate groups at positions a and c of cobyrinate, using either L-glutamine or ammonia as the nitrogen source. This chain is Cobyrinate a,c-diamide synthase, found in Sulfolobus acidocaldarius (strain ATCC 33909 / DSM 639 / JCM 8929 / NBRC 15157 / NCIMB 11770).